Consider the following 395-residue polypeptide: uncharacterized protein (395 aa).

2 disordered regions span residues 17 to 155 (EVKK…QVKT) and 276 to 304 (EERE…HEQK). Polar residues-rich tracts occupy residues 42–71 (DGNN…SNVV) and 81–96 (GDAS…NVVK). Residues 103–133 (VAEKPEKEDLAVIESEDKAAKPDGEIKKNVE) are compositionally biased toward basic and acidic residues. Low complexity predominate over residues 134–143 (TEVTSRSTSS). 2 stretches are compositionally biased toward basic and acidic residues: residues 144 to 155 (QEKDELEKQVKT) and 276 to 290 (EERE…KEQS). Residues 224-351 (LKMNGKEDDL…QRRLKELEAM (128 aa)) are a coiled coil. Polar residues predominate over residues 291–300 (SEGSKTANQT).

The protein resides in the cytoplasm. This is an uncharacterized protein from Schizosaccharomyces pombe (strain 972 / ATCC 24843) (Fission yeast).